A 788-amino-acid chain; its full sequence is Spastin (788 aa).

The tract at residues 1–105 (MVRTKNQSSS…PRSAGGPSSV (105 aa)) is disordered. Residues 1–116 (MVRTKNQSSS…KQNLYVVSFP (116 aa)) are Cytoplasmic-facing. Residues 1-227 (MVRTKNQSSS…NRSGSGYSPG (227 aa)) form a required for localization to punctate cytoplasmic foci region. 2 stretches are compositionally biased toward low complexity: residues 8–48 (SSSS…SSHR) and 57–75 (ATNV…SSPD). Positions 117 to 137 (IIFLFNVLRSLIYQLFCIFRY) form an intramembrane region, helical. Residues 138–788 (LYGASTKVIY…WSSDYGDITI (651 aa)) lie on the Cytoplasmic side of the membrane. A sufficient for interaction with microtubules and microtubule severing region spans residues 227–788 (GPGDPLLAKQ…WSSDYGDITI (562 aa)). The 76-residue stretch at 240-315 (HRRAFEYISK…SMARDRLHFL (76 aa)) folds into the MIT domain. The span at 331-353 (EKQKANESREQQQKPQKAREAAD) shows a compositional bias: basic and acidic residues. The interval 331 to 484 (EKQKANESRE…SGSGSGASTP (154 aa)) is disordered. A compositionally biased stretch (low complexity) spans 387-400 (ATATTPTSSSSLAS). Polar residues-rich tracts occupy residues 419–433 (NKSQ…SKTS) and 453–469 (QFSS…RTPI). A required for interaction with microtubules region spans residues 471–485 (NNGASGSGSGASTPV). 553–560 (GPPGNGKT) provides a ligand contact to ATP.

This sequence belongs to the AAA ATPase family. Spastin subfamily. Homohexamer. The homohexamer is stabilized by ATP-binding. The homohexamer may adopt a ring conformation through which microtubules pass prior to being severed. Interacts with microtubules. Interacts with atl; may be involved in microtubule dynamics.

It localises to the membrane. It is found in the cytoplasm. The protein localises to the cytoskeleton. Its subcellular location is the microtubule organizing center. The protein resides in the centrosome. It localises to the chromosome. It is found in the lipid droplet. The catalysed reaction is n ATP + n H2O + a microtubule = n ADP + n phosphate + (n+1) alpha/beta tubulin heterodimers.. ATP-dependent microtubule severing protein. Stimulates microtubule minus-end depolymerization and poleward microtubule flux in the mitotic spindle. Regulates microtubule stability in the neuromuscular junction synapse. Involved in lipid metabolism by regulating the size and distribution of lipid droplets. Involved in axon regeneration by regulating microtubule severing. The polypeptide is Spastin (Drosophila persimilis (Fruit fly)).